Consider the following 291-residue polypeptide: Filament protein FIN1 (291 aa).

Position 54 is a phosphoserine (serine 54). Threonine 68 carries the post-translational modification Phosphothreonine. 2 positions are modified to phosphoserine: serine 74 and serine 88. Residues 254-284 adopt a coiled-coil conformation; sequence VELKEIKDLLLQMLRRQREIESRLSNIELQL.

In terms of assembly, homooligomer; in vitro, FIN1 self-assembles into 10 nm diameter filaments. Interacts with the 14-3-3 proteins BMH1 and BMH2, and the protein phosphatase 1 complex catalytic subunit GLC7. Phosphorylated by CDC28. Phosphorylation is required for BMH1 and BMH2 interaction. Dephosphorylation by GLC7 depends on the presence of BMH1 and BMH2.

The protein localises to the nucleus. It is found in the cytoplasm. Its subcellular location is the cytoskeleton. The protein resides in the spindle pole. Its function is as follows. Forms cell-cycle specific filaments between the spindle pole bodies of dividing yeast cells. The chain is Filament protein FIN1 (FIN1) from Saccharomyces cerevisiae (strain ATCC 204508 / S288c) (Baker's yeast).